Consider the following 377-residue polypeptide: Putative F-box protein At1g70380 (377 aa).

The region spanning 3–48 (NTSFETLALDMQIEILARLPLKYLMRCMCVSKKWASLIRGEDFRSA) is the F-box domain.

This is Putative F-box protein At1g70380 from Arabidopsis thaliana (Mouse-ear cress).